A 358-amino-acid chain; its full sequence is Isopentenyl-diphosphate delta-isomerase (358 aa).

12–13 (RK) is a binding site for substrate. Residues 69 to 71 (AMT), serine 99, and asparagine 128 each bind FMN. Glutamine 158 is a binding site for substrate. Glutamate 159 is a binding site for Mg(2+). Residues lysine 190, threonine 220, 267 to 269 (GIR), and 288 to 289 (AG) contribute to the FMN site.

This sequence belongs to the IPP isomerase type 2 family. As to quaternary structure, homooctamer. Dimer of tetramers. The cofactor is FMN. NADPH is required as a cofactor. It depends on Mg(2+) as a cofactor.

Its subcellular location is the cytoplasm. The enzyme catalyses isopentenyl diphosphate = dimethylallyl diphosphate. Its function is as follows. Involved in the biosynthesis of isoprenoids. Catalyzes the 1,3-allylic rearrangement of the homoallylic substrate isopentenyl (IPP) to its allylic isomer, dimethylallyl diphosphate (DMAPP). This is Isopentenyl-diphosphate delta-isomerase from Listeria innocua serovar 6a (strain ATCC BAA-680 / CLIP 11262).